Consider the following 1244-residue polypeptide: ATP-dependent helicase/nuclease subunit A (1244 aa).

The UvrD-like helicase ATP-binding domain occupies 4-475 (KKWTAEQLAA…IGLSKNFRSR (472 aa)). 25–32 (AAAGAGKT) contributes to the ATP binding site. The region spanning 515–816 (EDVKTATGPV…RIMSIHKSKG (302 aa)) is the UvrD-like helicase C-terminal domain. The disordered stretch occupies residues 538–559 (EQNTDSAEEKLTDGEEQEDLDS).

The protein belongs to the helicase family. AddA subfamily. In terms of assembly, heterodimer of AddA and AddB/RexB. Mg(2+) is required as a cofactor.

It catalyses the reaction Couples ATP hydrolysis with the unwinding of duplex DNA by translocating in the 3'-5' direction.. The enzyme catalyses ATP + H2O = ADP + phosphate + H(+). In terms of biological role, the heterodimer acts as both an ATP-dependent DNA helicase and an ATP-dependent, dual-direction single-stranded exonuclease. Recognizes the chi site generating a DNA molecule suitable for the initiation of homologous recombination. The AddA nuclease domain is required for chi fragment generation; this subunit has the helicase and 3' -&gt; 5' nuclease activities. In Desulforamulus reducens (strain ATCC BAA-1160 / DSM 100696 / MI-1) (Desulfotomaculum reducens), this protein is ATP-dependent helicase/nuclease subunit A.